A 195-amino-acid polypeptide reads, in one-letter code: Imidazoleglycerol-phosphate dehydratase (195 aa).

The protein belongs to the imidazoleglycerol-phosphate dehydratase family.

The protein localises to the cytoplasm. It carries out the reaction D-erythro-1-(imidazol-4-yl)glycerol 3-phosphate = 3-(imidazol-4-yl)-2-oxopropyl phosphate + H2O. The protein operates within amino-acid biosynthesis; L-histidine biosynthesis; L-histidine from 5-phospho-alpha-D-ribose 1-diphosphate: step 6/9. The polypeptide is Imidazoleglycerol-phosphate dehydratase (Methylobacterium radiotolerans (strain ATCC 27329 / DSM 1819 / JCM 2831 / NBRC 15690 / NCIMB 10815 / 0-1)).